The sequence spans 131 residues: Small ribosomal subunit protein uS9 (131 aa).

It belongs to the universal ribosomal protein uS9 family.

In Actinobacillus pleuropneumoniae serotype 5b (strain L20), this protein is Small ribosomal subunit protein uS9.